A 323-amino-acid chain; its full sequence is Fructokinase-1 (323 aa).

It belongs to the carbohydrate kinase PfkB family. As to expression, expressed in stems, at higher levels in roots, and hardly detectable in leaves.

It carries out the reaction D-fructose + ATP = D-fructose 6-phosphate + ADP + H(+). The protein operates within glycan biosynthesis; starch biosynthesis. Its activity is regulated as follows. Inhibited at high fructose. Functionally, may play an important role in maintaining the flux of carbon towards starch formation in endosperm. May also be involved in a sugar-sensing pathway. The polypeptide is Fructokinase-1 (FRK1) (Zea mays (Maize)).